The primary structure comprises 459 residues: Glutamyl-tRNA(Gln) amidotransferase subunit A, mitochondrial (459 aa).

Active-site charge relay system residues include lysine 37 and serine 114. The active-site Acyl-ester intermediate is serine 138.

It belongs to the amidase family. GatA subfamily. As to quaternary structure, subunit of the heterotrimeric GatFAB amidotransferase (AdT) complex, composed of A, B and F subunits.

The protein resides in the mitochondrion. It carries out the reaction L-glutamyl-tRNA(Gln) + L-glutamine + ATP + H2O = L-glutaminyl-tRNA(Gln) + L-glutamate + ADP + phosphate + H(+). Its function is as follows. Allows the formation of correctly charged Gln-tRNA(Gln) through the transamidation of misacylated Glu-tRNA(Gln) in the mitochondria. The reaction takes place in the presence of glutamine and ATP through an activated gamma-phospho-Glu-tRNA(Gln). This chain is Glutamyl-tRNA(Gln) amidotransferase subunit A, mitochondrial, found in Yarrowia lipolytica (strain CLIB 122 / E 150) (Yeast).